Here is a 1204-residue protein sequence, read N- to C-terminus: ATP-dependent helicase/nuclease subunit A (1204 aa).

A UvrD-like helicase ATP-binding domain is found at 2 to 472; sequence PQFTKEQEKA…ILLSDNFRST (471 aa). 23-30 provides a ligand contact to ATP; that stretch reads ASAGSGKT. One can recognise a UvrD-like helicase C-terminal domain in the interval 500-783; sequence GQLIFGAKYY…RLMTIHGSKG (284 aa).

The protein belongs to the helicase family. AddA subfamily. Heterodimer of AddA and AddB/RexB. The cofactor is Mg(2+).

The catalysed reaction is Couples ATP hydrolysis with the unwinding of duplex DNA by translocating in the 3'-5' direction.. The enzyme catalyses ATP + H2O = ADP + phosphate + H(+). Functionally, the heterodimer acts as both an ATP-dependent DNA helicase and an ATP-dependent, dual-direction single-stranded exonuclease. Recognizes the chi site generating a DNA molecule suitable for the initiation of homologous recombination. The AddA nuclease domain is required for chi fragment generation; this subunit has the helicase and 3' -&gt; 5' nuclease activities. The sequence is that of ATP-dependent helicase/nuclease subunit A from Lactobacillus helveticus (strain DPC 4571).